We begin with the raw amino-acid sequence, 108 residues long: uncharacterized protein (108 aa).

This is an uncharacterized protein from Microplitis demolitor bracovirus (isolate Webb) (MdBV).